A 127-amino-acid chain; its full sequence is Glycine cleavage system H protein (127 aa).

The Lipoyl-binding domain maps to 27–109 (TVRVGITHIA…YGEGWLYEVK (83 aa)). Lys-68 bears the N6-lipoyllysine mark.

Belongs to the GcvH family. In terms of assembly, the glycine cleavage system is composed of four proteins: P, T, L and H. The cofactor is (R)-lipoate.

In terms of biological role, the glycine cleavage system catalyzes the degradation of glycine. The H protein shuttles the methylamine group of glycine from the P protein to the T protein. The protein is Glycine cleavage system H protein of Corynebacterium jeikeium (strain K411).